Consider the following 153-residue polypeptide: Insulin-like growth factor 1 (153 aa).

Residues 49–77 are b; that stretch reads GPETLCGAELVDALQFVCGDRGFYFNKPT. Intrachain disulfides connect cysteine 54–cysteine 96, cysteine 66–cysteine 109, and cysteine 95–cysteine 100. The segment at 78-89 is c; it reads GYGSSSRRAPQT. Positions 90–110 are a; that stretch reads GIVDECCFRSCDLRRLEMYCA. The interval 111 to 118 is d; it reads PLKPAKSA. A propeptide spans 119 to 153 (e peptide); it reads RSVRAQRHTDMPKAQKEVHLKNTSRGSSGNKNYRM. The interval 120-153 is disordered; the sequence is SVRAQRHTDMPKAQKEVHLKNTSRGSSGNKNYRM. Over residues 125-138 the composition is skewed to basic and acidic residues; it reads RHTDMPKAQKEVHL. The span at 139–153 shows a compositional bias: polar residues; it reads KNTSRGSSGNKNYRM.

Belongs to the insulin family. As to quaternary structure, forms a ternary complex with IGFR1 and ITGAV:ITGB3. Forms a ternary complex with IGFR1 and ITGA6:ITGB4. Forms a ternary complex with IGFBP3 and ALS.

It localises to the secreted. Its function is as follows. The insulin-like growth factors, isolated from plasma, are structurally and functionally related to insulin but have a much higher growth-promoting activity. May be a physiological regulator of [1-14C]-2-deoxy-D-glucose (2DG) transport and glycogen synthesis in osteoblasts. Stimulates glucose transport in bone-derived osteoblastic (PyMS) cells and is effective at much lower concentrations than insulin, not only regarding glycogen and DNA synthesis but also with regard to enhancing glucose uptake. May play a role in synapse maturation. Ca(2+)-dependent exocytosis of IGF1 is required for sensory perception of smell in the olfactory bulb. Acts as a ligand for IGF1R. Binds to the alpha subunit of IGF1R, leading to the activation of the intrinsic tyrosine kinase activity which autophosphorylates tyrosine residues in the beta subunit thus initiating a cascade of down-stream signaling events leading to activation of the PI3K-AKT/PKB and the Ras-MAPK pathways. Binds to integrins ITGAV:ITGB3 and ITGA6:ITGB4. Its binding to integrins and subsequent ternary complex formation with integrins and IGFR1 are essential for IGF1 signaling. Induces the phosphorylation and activation of IGFR1, MAPK3/ERK1, MAPK1/ERK2 and AKT1. As part of the MAPK/ERK signaling pathway, acts as a negative regulator of apoptosis in cardiomyocytes via promotion of STUB1/CHIP-mediated ubiquitination and degradation of ICER-type isoforms of CREM. The chain is Insulin-like growth factor 1 from Sus scrofa (Pig).